We begin with the raw amino-acid sequence, 240 residues long: Ubiquinone biosynthesis O-methyltransferase (240 aa).

Arg-44, Gly-64, Asp-85, and Met-129 together coordinate S-adenosyl-L-methionine.

Belongs to the methyltransferase superfamily. UbiG/COQ3 family.

It catalyses the reaction a 3-demethylubiquinol + S-adenosyl-L-methionine = a ubiquinol + S-adenosyl-L-homocysteine + H(+). It carries out the reaction a 3-(all-trans-polyprenyl)benzene-1,2-diol + S-adenosyl-L-methionine = a 2-methoxy-6-(all-trans-polyprenyl)phenol + S-adenosyl-L-homocysteine + H(+). Its pathway is cofactor biosynthesis; ubiquinone biosynthesis. In terms of biological role, O-methyltransferase that catalyzes the 2 O-methylation steps in the ubiquinone biosynthetic pathway. The chain is Ubiquinone biosynthesis O-methyltransferase from Escherichia coli (strain SMS-3-5 / SECEC).